A 1088-amino-acid polypeptide reads, in one-letter code: ATP-dependent helicase/deoxyribonuclease subunit B (1088 aa).

This sequence belongs to the helicase family. AddB/RexB type 2 subfamily. As to quaternary structure, heterodimer of AddA and RexB. Requires Mg(2+) as cofactor.

Functionally, the heterodimer acts as both an ATP-dependent DNA helicase and an ATP-dependent, dual-direction single-stranded exonuclease. Recognizes the chi site generating a DNA molecule suitable for the initiation of homologous recombination. This subunit has 5' -&gt; 3' nuclease activity but not helicase activity. The protein is ATP-dependent helicase/deoxyribonuclease subunit B of Streptococcus suis (strain 98HAH33).